We begin with the raw amino-acid sequence, 267 residues long: MEMO1 family protein MA_0601 (267 aa).

The protein belongs to the MEMO1 family.

The polypeptide is MEMO1 family protein MA_0601 (Methanosarcina acetivorans (strain ATCC 35395 / DSM 2834 / JCM 12185 / C2A)).